The following is a 44-amino-acid chain: Unknown protein 1 (44 aa).

This Lonomia obliqua (Moth) protein is Unknown protein 1.